The following is a 95-amino-acid chain: Class II hydrophobin 3 (95 aa).

An N-terminal signal peptide occupies residues 1-16; that stretch reads MKLLAVAALLAGAAIA. Intrachain disulfides connect cysteine 28-cysteine 77, cysteine 38-cysteine 68, cysteine 39-cysteine 51, and cysteine 78-cysteine 89.

The protein belongs to the cerato-ulmin hydrophobin family.

It is found in the secreted. It localises to the cell wall. Aerial growth, conidiation, and dispersal of filamentous fungi in the environment rely upon a capability of their secreting small amphipathic proteins called hydrophobins (HPBs) with low sequence identity. Class I can self-assemble into an outermost layer of rodlet bundles on aerial cell surfaces, conferring cellular hydrophobicity that supports fungal growth, development and dispersal; whereas Class II form highly ordered films at water-air interfaces through intermolecular interactions but contribute nothing to the rodlet structure. Hyd3 plays a neglectable role in hyphal growth and asexual development and does not seem involved in cellular hydrophobicity, conidial adhesion, stress tolerance nor insect pathogenicity. This Metarhizium robertsii (strain ARSEF 23 / ATCC MYA-3075) (Metarhizium anisopliae (strain ARSEF 23)) protein is Class II hydrophobin 3.